The sequence spans 123 residues: Small ribosomal subunit protein uS12c (123 aa).

Residues 103 to 123 (AAGVKNRKQSRSKYGAKKPKE) are disordered. Basic residues predominate over residues 107–123 (KNRKQSRSKYGAKKPKE).

It belongs to the universal ribosomal protein uS12 family. In terms of assembly, part of the 30S ribosomal subunit.

It is found in the plastid. The protein localises to the chloroplast. Its function is as follows. With S4 and S5 plays an important role in translational accuracy. Located at the interface of the 30S and 50S subunits. The sequence is that of Small ribosomal subunit protein uS12c (rps12) from Guillardia theta (Cryptophyte).